The following is a 192-amino-acid chain: Nucleotidase CA_C3379 (192 aa).

This sequence belongs to the 5'(3')-deoxyribonucleotidase family. It depends on Mg(2+) as a cofactor.

It carries out the reaction sugar phosphate + H2O = sugar + phosphate.. Functionally, catalyzes the dephosphorylation of nucleotide monophosphates and of different sugar phosphates in vitro. The chain is Nucleotidase CA_C3379 from Clostridium acetobutylicum (strain ATCC 824 / DSM 792 / JCM 1419 / IAM 19013 / LMG 5710 / NBRC 13948 / NRRL B-527 / VKM B-1787 / 2291 / W).